Consider the following 980-residue polypeptide: MAAVPPENGVDGDDEREEEEEDEEEEEEEEEEENGDEAEEEPRLKYQRMGGNVPALLSNDAASCIAVAARMIALGTHDGTVRILDLLGNQVKEFRAHTAPVNDINFDTEGEYIGSCSDDGSVVINSLFTDDEKMKFDYHRPMKAISLDPDYTKKQSKRFVAGGLAGHLYMNSKKWFGNKDQVLHSGEGPIHSVKWRGSLIAWANDVGVKVYDTAKDQRVTFIEKPRGSPRPEALLPHLVWQDDTLLVIGWGTSVKIASIKSDQQQTGTFRQIQMSSLTQVDIVASFQTSYYISGIAPFGDSLVILAYIPIEGDGEKEFSSTTTLSRQGNAQRPEIRIVSWNNDELTMDALPVHGFEHYKAKDYSLAHAPFPGSSYAGGQWAAGDEPLYYIVSPKDVVIAKPRDAEDHINWLLQHGFHEKALAAVEASEGRTELIDKVGAGYLDHLIVERKYAEAASLCPKLLRGSASAWERWVFHFAQLRQLPVLVPYMPTDNPRLKDTVYEVALVALATNPSYHKELLSAVKSWPRSVYSALTVISAIEPQLNTSSMTDALKEALAELYVIDGQYQKAFSLYADLLKPEVFDFIEKYSLHEAIRGKVVQLMLLDCKRATVLFIQNRDLIPPSEVVPQLLKAGKNPQVLKAGKKCDSRYYLYLYLHALFEVSHDTGKDFHDMQVELYAEYDTKMLLPFLRSSQHYKLEKAYELCVKKDFLREQVFVLGRMGNAKQALAVIINKLGDIEEAVEFVSMQHDDDLWEELIKQCLNKPEMVGLLLEHTVGNLDPLYIVNMVPNGLEIPRLRDRLVKIVTDYRTETSLRHGCNDILKTDIVNLLVKCFNEARRGVCLSHEDDDSRAKREDNNRSSFSQRMVVDKSLSIKMTEVKSKTRGDTRCCMCFDPVSIRGDTVVVFFCCHAYHETCLMDAAFSNNNHKTTKGSSGYEYSYDNGVDEEEEDEEEDEDGDGDRPGRSRLRCILCTTAAAASAR.

The disordered stretch occupies residues 1 to 42 (MAAVPPENGVDGDDEREEEEEDEEEEEEEEEEENGDEAEEEP). Over residues 10 to 40 (VDGDDEREEEEEDEEEEEEEEEEENGDEAEE) the composition is skewed to acidic residues. 3 WD repeats span residues 57–95 (LSND…KEFR), 96–135 (AHTA…EKMK), and 185–221 (SGEG…RVTF). Residues 613–769 (FIQNRDLIPP…CLNKPEMVGL (157 aa)) form a CHCR repeat. The disordered stretch occupies residues 931 to 964 (GSSGYEYSYDNGVDEEEEDEEEDEDGDGDRPGRS). Positions 942-957 (GVDEEEEDEEEDEDGD) are enriched in acidic residues.

It belongs to the VPS41 family. Component of the homotypic fusion and vacuole protein sorting (HOPS) complex composed of the class C Vps core proteins VPS11, VCL1, VPS18 and VPS33, which in HOPS further associates with VPS39 and VPS41.

Required for vacuolar assembly and vacuolar traffic. This is Vacuolar protein sorting-associated protein 41 homolog (VPS41) from Arabidopsis thaliana (Mouse-ear cress).